Reading from the N-terminus, the 392-residue chain is Phospho-N-acetylmuramoyl-pentapeptide-transferase (392 aa).

10 helical membrane passes run alanine 29–arginine 49, threonine 76–leucine 96, phenylalanine 100–tryptophan 120, tyrosine 137–glutamate 157, isoleucine 193–serine 213, glycine 225–threonine 245, serine 262–phenylalanine 282, valine 289–isoleucine 309, isoleucine 314–valine 334, and glutamine 369–leucine 389.

The protein belongs to the glycosyltransferase 4 family. MraY subfamily. Mg(2+) is required as a cofactor.

It localises to the cell inner membrane. It carries out the reaction UDP-N-acetyl-alpha-D-muramoyl-L-alanyl-gamma-D-glutamyl-meso-2,6-diaminopimeloyl-D-alanyl-D-alanine + di-trans,octa-cis-undecaprenyl phosphate = di-trans,octa-cis-undecaprenyl diphospho-N-acetyl-alpha-D-muramoyl-L-alanyl-D-glutamyl-meso-2,6-diaminopimeloyl-D-alanyl-D-alanine + UMP. Its pathway is cell wall biogenesis; peptidoglycan biosynthesis. In terms of biological role, catalyzes the initial step of the lipid cycle reactions in the biosynthesis of the cell wall peptidoglycan: transfers peptidoglycan precursor phospho-MurNAc-pentapeptide from UDP-MurNAc-pentapeptide onto the lipid carrier undecaprenyl phosphate, yielding undecaprenyl-pyrophosphoryl-MurNAc-pentapeptide, known as lipid I. The protein is Phospho-N-acetylmuramoyl-pentapeptide-transferase of Polaromonas sp. (strain JS666 / ATCC BAA-500).